Here is a 420-residue protein sequence, read N- to C-terminus: Dynein axonemal assembly factor 4 (420 aa).

The CS domain occupies 3–87 (VRVSEFSWQQ…KEPVLWDSLS (85 aa)). Positions 7 to 103 (EFSWQQTPAT…EMMQRIREKS (97 aa)) are mediates interaction with ESR1 and STUB1. Residues 164-192 (ECQKKADGQKRVQRKEKPLEGKQAEETKA) are compositionally biased toward basic and acidic residues. Positions 164–212 (ECQKKADGQKRVQRKEKPLEGKQAEETKALKPRGLPRKAPPTRLPTRGR) are disordered. TPR repeat units lie at residues 288–321 (PDWLKDKGNKLFATENYLAAVDAYNLAIRLNCKI), 322–355 (PLLYLNRAACHLKLKNLHKAIEDSSKALELLTPP), and 364–397 (MKAHVRRGTAFCQLELYVEGLQDYEAALKIDPAN).

In terms of assembly, interacts with ZMYND10. Interacts with ESR1 and ESR2. Interacts with STUB1. Interacts with DNAAF2. Interacts with CCT3, CCT4, CCT5 and CCT8. Interacts with DNAAF6/PIH1D3.

It localises to the nucleus. Its subcellular location is the cytoplasm. It is found in the dynein axonemal particle. The protein localises to the cell projection. The protein resides in the neuron projection. In terms of biological role, involved in neuronal migration during development of the cerebral neocortex. May regulate the stability and proteasomal degradation of the estrogen receptors that play an important role in neuronal differentiation, survival and plasticity. Axonemal dynein assembly factor required for ciliary motility. The sequence is that of Dynein axonemal assembly factor 4 from Mus musculus (Mouse).